We begin with the raw amino-acid sequence, 455 residues long: Phosphoglucosamine mutase (455 aa).

Residue Ser102 is the Phosphoserine intermediate of the active site. Residues Ser102, Asp241, Asp243, and Asp245 each contribute to the Mg(2+) site. Residue Ser102 is modified to Phosphoserine.

The protein belongs to the phosphohexose mutase family. Mg(2+) serves as cofactor. In terms of processing, activated by phosphorylation.

The enzyme catalyses alpha-D-glucosamine 1-phosphate = D-glucosamine 6-phosphate. In terms of biological role, catalyzes the conversion of glucosamine-6-phosphate to glucosamine-1-phosphate. This is Phosphoglucosamine mutase from Legionella pneumophila (strain Corby).